A 496-amino-acid polypeptide reads, in one-letter code: 7,8-epoxymelianol synthase CYP88A154 (496 aa).

A helical membrane pass occupies residues 11–31 (FNFLWLILAIFVGTYVVLFGF). Residue Cys444 coordinates heme.

Belongs to the cytochrome P450 family. The cofactor is heme.

The protein resides in the membrane. It catalyses the reaction melianol + reduced [NADPH--hemoprotein reductase] + O2 = 7,8-epoxymelianol + oxidized [NADPH--hemoprotein reductase] + H2O + H(+). Its pathway is secondary metabolite biosynthesis; terpenoid biosynthesis. Its function is as follows. Monooxygenase involved in the biosynthesis of glabretanes, limonoids and quassinoids triterpene natural products such as ailanthone, chaparrinone, glaucarubinone and amarolide, allelopathic degraded triterpene lactones inhibiting the growth of other plants, and possessing antimalarial, antifeedant, insecticidal, anti-inflammatory and anticancer activities. Catalyzes the epoxidation of melianol to produce 7,8-epoxymelianol. This Ailanthus altissima (Tree-of-heaven) protein is 7,8-epoxymelianol synthase CYP88A154.